Reading from the N-terminus, the 278-residue chain is HTH-type transcriptional regulator ExsA (278 aa).

The 99-residue stretch at 171 to 269 folds into the HTH araC/xylS-type domain; the sequence is ERLQLFMEKH…GCTPSRSRQG (99 aa). 2 consecutive DNA-binding regions (H-T-H motif) follow at residues 188 to 209 and 236 to 259; these read SDFSREFGMGLTTFKELFGSVY and IVDIAMEAGFSSQSYFTQSYRRRF.

Homodimer. Interacts with ExsD; this interaction inhibits ExsA activity.

Its activity is regulated as follows. In the absence of inducing signals such as low Ca(2+) or host cell contact, the T3SS/injectisome is expressed at a low basal level and exists in a quiescent state due to ExsA sequestration by ExsD in a 1:1 complex. Upon host cell contact, this interaction is disrupted by the anti-antiactivator protein ExsC leading to ExsA activation. In terms of biological role, transcriptional regulator that plays an essential role in the activation the type III secretion system (T3SS) operons. In addition, ExsA directly regulates the transcription of ImpA virulence factor that cooperatively inhibits the functions of host macrophages together with the T3SS. This is HTH-type transcriptional regulator ExsA (exsA) from Pseudomonas aeruginosa (strain ATCC 15692 / DSM 22644 / CIP 104116 / JCM 14847 / LMG 12228 / 1C / PRS 101 / PAO1).